The primary structure comprises 675 residues: Neurexin-3b-beta (675 aa).

Positions 1–30 (MRPHFKTRYPQWLSCMLPLVTGCVFGAVWG) are cleaved as a signal peptide. Over 31–599 (SNLDSTVVLS…EVIRESSSTT (569 aa)) the chain is Extracellular. In terms of domain architecture, Laminin G-like spans 81–281 (ATYIFGKGGG…HANIKINGSV (201 aa)). Disordered regions lie at residues 313–337 (TTLS…DIVS) and 490–534 (FKPK…MNNR). Residues 325 to 335 (SPPTIQTTDDI) are compositionally biased toward polar residues. The chain crosses the membrane as a helical span at residues 600–620 (GMVVGIVSAAALCILILLYAM). Over 621–675 (YKYRNRDEGSYQVDETRNYISNSAQNNGTVVKDKQPSTKGASNKRPKDKDKEYYV) the chain is Cytoplasmic. The segment at 642-675 (NSAQNNGTVVKDKQPSTKGASNKRPKDKDKEYYV) is disordered. A compositionally biased stretch (basic and acidic residues) spans 665–675 (RPKDKDKEYYV).

It belongs to the neurexin family. Processed by alpha-secretase leading to the formation of an extracellular soluble protein as well as a C-terminal membrane-embedded fragment (CTF). Proteolysis of these CTFs by gamma-secretase releases intracellular domains (ICDs) and extracellular peptides.

It localises to the membrane. Its function is as follows. Neuronal cell surface protein that may be involved in cell recognition and cell adhesion. The sequence is that of Neurexin-3b-beta (nrxn3b) from Danio rerio (Zebrafish).